A 357-amino-acid chain; its full sequence is Transcription factor unc-86 (357 aa).

The POU-IV box motif lies at 35–44 (RAAQVALADI). The 78-residue stretch at 155–232 (DMDTDPRQLE…ILHSWLEKAE (78 aa)) folds into the POU-specific domain. The homeobox DNA-binding region spans 253 to 312 (KKRKRTSIAAPEKRELEQFFKQQPRPSGERIASIADRLDLKKNVVRVWFCNQRQKQKRDF).

Belongs to the POU transcription factor family. Class-4 subfamily. In terms of assembly, interacts with mec-3; the heterooligomer binds to the promoters of mec-3, mec-4 and mec-7. Specific to neurons and neuroblasts. Expressed in CEM head neurons and in IL2, URA, URB, URX and URY neurons. Not expressed in olfactory sensory neurons but expressed in AIZ interneurons.

It localises to the nucleus. Its function is as follows. Transcription factor required for correct cell fate determination and differentiation in diverse neuronal cell lineages where it plays a role in specifying the fate of daughter cells during cell divisions. Involved in sensory neuron production and function. Binds both alone and with mec-3 to the mec-3 promoter to initiate and maintain mec-3 expression which is required for sensory neuron differentiation. In addition, binds both alone and with mec-3 to the promoters of mec-4 and mec-7 which act to regulate sensory neuron function. Involved in determining the identity of the serotonergic NSM neurons and the cholinergic IL2 sensory and URA motor neurons. Promotes expression of the cfi-1 transcription factor in the URA and IL2 neurons which in turn activates normal URA and IL2 gene expression. Required to determine the identity of BDU sensory neurons in concert with transcription factor unc-86, regulating expression of a number of genes, including transcription factors ceh-14 and ahr-1, neuropeptides flp-10, nlp-1 and nlp-15, and tyramine receptor-encoding ser-2. Regulates expression of a number of genes in NSM neurons including bas-1, cat-1, dop-3, mgl-3, nlp-13, scd-2 and ptps-1. In the IL2 neurons, required for expression of cho-1, gcy-19, klp-6, lag-2, unc-5 and unc-17. Promotes expression of pkd-2 in the male-specific CEM head neurons. Required for dauer-specific branching of IL2Q neurons and nictation behavior. Controls both the timing and direction of axon outgrowth in HSN neurons. Plays a role in serotonin production by regulating expression of the tryptophan hydrolase tph-1 which catalyzes serotonin synthesis, in the AIM, NSM, HSN and RIH neurons. Involved in regulation of lin-11 expression in the AIZ interneurons, the major interneurons of the olfactory pathway, and is required for odortaxis behavior. Involved in neurite pruning between AIM neurons during larval development by regulating the expression of transcription factor mbr-1. Required for correct localization of unc-40. The chain is Transcription factor unc-86 (unc-86) from Caenorhabditis elegans.